The following is a 91-amino-acid chain: Probable Fe(2+)-trafficking protein (91 aa).

Belongs to the Fe(2+)-trafficking protein family.

Could be a mediator in iron transactions between iron acquisition and iron-requiring processes, such as synthesis and/or repair of Fe-S clusters in biosynthetic enzymes. This chain is Probable Fe(2+)-trafficking protein, found in Shewanella denitrificans (strain OS217 / ATCC BAA-1090 / DSM 15013).